A 143-amino-acid polypeptide reads, in one-letter code: Small ribosomal subunit protein uS12 (143 aa).

The segment covering 1–20 (MGKCRGLRTARKLRSHRRDQ) has biased composition (basic residues). Residues 1–26 (MGKCRGLRTARKLRSHRRDQKWHDKQ) are disordered. K37 is covalently cross-linked (Glycyl lysine isopeptide (Lys-Gly) (interchain with G-Cter in SUMO2)). Position 54 is an N6-succinyllysine (K54). Position 62 is a 3-hydroxyproline (P62). Residue K135 is modified to N6-acetyllysine.

The protein belongs to the universal ribosomal protein uS12 family. As to quaternary structure, component of the 40S small ribosomal subunit. Part of the small subunit (SSU) processome, composed of more than 70 proteins and the RNA chaperone small nucleolar RNA (snoRNA) U3. In terms of processing, hydroxylation at Pro-62 affects translation termination efficiency.

It is found in the cytoplasm. Its subcellular location is the cytosol. The protein localises to the rough endoplasmic reticulum. It localises to the nucleus. The protein resides in the nucleolus. Its function is as follows. Component of the ribosome, a large ribonucleoprotein complex responsible for the synthesis of proteins in the cell. The small ribosomal subunit (SSU) binds messenger RNAs (mRNAs) and translates the encoded message by selecting cognate aminoacyl-transfer RNA (tRNA) molecules. The large subunit (LSU) contains the ribosomal catalytic site termed the peptidyl transferase center (PTC), which catalyzes the formation of peptide bonds, thereby polymerizing the amino acids delivered by tRNAs into a polypeptide chain. The nascent polypeptides leave the ribosome through a tunnel in the LSU and interact with protein factors that function in enzymatic processing, targeting, and the membrane insertion of nascent chains at the exit of the ribosomal tunnel. Plays an important role in translational accuracy. Part of the small subunit (SSU) processome, first precursor of the small eukaryotic ribosomal subunit. During the assembly of the SSU processome in the nucleolus, many ribosome biogenesis factors, an RNA chaperone and ribosomal proteins associate with the nascent pre-rRNA and work in concert to generate RNA folding, modifications, rearrangements and cleavage as well as targeted degradation of pre-ribosomal RNA by the RNA exosome. The sequence is that of Small ribosomal subunit protein uS12 (RPS23) from Bos taurus (Bovine).